Here is a 143-residue protein sequence, read N- to C-terminus: Transcriptional regulator MraZ (143 aa).

2 consecutive SpoVT-AbrB domains span residues 5-47 (EYEH…TLEE) and 76-119 (AIEV…DRET).

It belongs to the MraZ family. As to quaternary structure, forms oligomers.

The protein localises to the cytoplasm. The protein resides in the nucleoid. This Staphylococcus haemolyticus (strain JCSC1435) protein is Transcriptional regulator MraZ.